The chain runs to 1219 residues: Pheromone-regulated membrane protein 10 (1219 aa).

Residues 1 to 11 (MMRTQSDEHVA) are compositionally biased toward basic and acidic residues. Disordered regions lie at residues 1–273 (MMRT…IERE), 303–490 (LASF…DPFT), 503–533 (HDDDEDEDNHGNFLTYDAADGSVTPTHEDYV), and 555–713 (EGNK…RPVK). Positions 42 to 53 (DENDDGHDDSDE) are enriched in acidic residues. A compositionally biased stretch (low complexity) spans 57-68 (SVVIPTPSVVIV). Residues 104-115 (LKSPGTPTTYSP) show a composition bias toward polar residues. Residues 136-155 (GSSLSSTTLMNTLLNSSGLG) are compositionally biased toward low complexity. Composition is skewed to acidic residues over residues 159 to 171 (TESEEDDDEDEEV) and 219 to 231 (QEEETVASTDDDG). Basic and acidic residues-rich tracts occupy residues 259–273 (ADRAARADAPLIERE), 330–346 (DDQRDQRDSHLALRREN), and 395–421 (LDRRLEDIKEKRAEDKEKRAEDNEKER). Residues 422 to 432 (QHHHHNHHHHH) are compositionally biased toward basic residues. Polar residues predominate over residues 435 to 446 (ETGPNTGASSPF). Residues 448-470 (EEEKDREAEEAEILRDQARDLVN) show a composition bias toward basic and acidic residues. A compositionally biased stretch (low complexity) spans 565–577 (TTVGDGTSTGDVS). Over residues 598–615 (KSKTKTTQKLGLKKKKKE) the composition is skewed to basic residues. Positions 616 to 641 (LLKIIEDQRKEKEENKKRPKWYDKSR) are enriched in basic and acidic residues. The span at 642 to 652 (STSPSPGGTPA) shows a compositional bias: low complexity. Positions 653–673 (PHHHHHIPGLHLHHHTKGHQR) are enriched in basic residues. Residues 693-713 (GGDKPPDRPRSLRSEALRPVK) are compositionally biased toward basic and acidic residues. 10 helical membrane passes run 864 to 884 (PPWLCVIFFACGTGVVSPYAF), 888 to 908 (WADIPMCIILGSVVGFFQIIV), 918 to 938 (VFEVSMSILISFLARAIGTIS), 945 to 965 (FCFAAIAQGSLAIILPGYIVL), 983 to 1003 (MFYAVIYSMFLGFGITLGAVV), 1021 to 1041 (LDPLWRILFVPLYSFFIALVN), 1049 to 1069 (PSMLLISGAGYTVTYFVGANI), 1075 to 1095 (SSYLTSAIGAFTIGILGNLYS), 1100 to 1120 (GLAFAAMLPGIFVQVPSGVAS), and 1184 to 1204 (LGFTMIQVAIGITVGLFAATL).

It belongs to the ThrE exporter (TC 2.A.79) family.

The protein localises to the membrane. The chain is Pheromone-regulated membrane protein 10 from Yarrowia lipolytica (strain CLIB 122 / E 150) (Yeast).